A 1082-amino-acid polypeptide reads, in one-letter code: Probable arabinosyltransferase B (1082 aa).

13 consecutive transmembrane segments (helical) span residues 28–50, 223–241, 262–281, 333–352, 359–381, 420–442, 462–481, 522–544, 557–574, 578–600, 613–635, 650–672, and 689–711; these read WVAT…LPVT, LAAM…LALW, VTAV…VIGA, SIWI…LLLS, LGPA…LGAW, AITT…AALL, WPLI…VVFA, AISR…FMML, AWRL…LMFT, WTHH…TVLV, AFLS…WWYV, GGVQ…AFWL, and APIP…IGVV.

The protein belongs to the emb family.

The protein localises to the cell membrane. Functionally, arabinosyl transferase responsible for the polymerization of arabinose into the arabinan of arabinogalactan. The protein is Probable arabinosyltransferase B (embB) of Mycolicibacterium smegmatis (Mycobacterium smegmatis).